Reading from the N-terminus, the 180-residue chain is VNFSEFSKKCSERWKTMSAKEKGKFEDMAKADKARYEREMKTYIPPKGETKKKFKDPNAPKRPPSAFFLFCSEYRPKIKGEHPGLSIGDVAKKLGEMWNNTAADDKQPYEKKAAKLKEKYEKDIAAYRAKGKPDAAKKGVVKAEKSKKKKEEEDDEEDEEDEEEEEEEEDEDEEEDDDDE.

The Nuclear localization signal (NLS) 1 signature appears at 1–8 (VNFSEFSK). Residues 1 to 44 (VNFSEFSKKCSERWKTMSAKEKGKFEDMAKADKARYEREMKTYI) constitute a DNA-binding region (HMG box 1). N6-acetyllysine is present on Lys8. Isoglutamyl lysine isopeptide (Lys-Gln) (interchain with Q-?) cross-links involve residues Lys8 and Lys9. Residue Cys10 is modified to Cysteine sulfonic acid (-SO3H). Lys33 is covalently cross-linked (Isoglutamyl lysine isopeptide (Lys-Gln) (interchain with Q-?)). The LPS binding (Lipid A) stretch occupies residues 45–61 (PPKGETKKKFKDPNAPK). The tract at residues 54–73 (FKDPNAPKRPPSAFFLFCSE) is cytokine-stimulating activity. Lys55 carries the post-translational modification N6-acetyllysine. The segment at residues 60 to 128 (PKRPPSAFFL…KYEKDIAAYR (69 aa)) is a DNA-binding region (HMG box 2). Position 65 is a phosphoserine (Ser65). Cys71 bears the Cysteine sulfonic acid (-SO3H) mark. N6-acetyllysine is present on residues Lys92, Lys93, Lys106, Lys137, Lys138, Lys142, and Lys145. Positions 115-148 (KLKEKYEKDIAAYRAKGKPDAAKKGVVKAEKSKK) are binding to AGER/RAGE. Residues 126–144 (AYRAKGKPDAAKKGVVKAE) are compositionally biased toward basic and acidic residues. The disordered stretch occupies residues 126–180 (AYRAKGKPDAAKKGVVKAEKSKKKKEEEDDEEDEEDEEEEEEEEDEDEEEDDDDE). Residues 143–149 (AEKSKKK) carry the Nuclear localization signal (NLS) 2 motif. The NLS 2 stretch occupies residues 143-149 (AEKSKKK). Lys145 is covalently cross-linked (Isoglutamyl lysine isopeptide (Lys-Gln) (interchain with Q-?)). Ser146 carries the post-translational modification ADP-ribosylserine. N6-acetyllysine occurs at positions 147, 148, 149, and 150. Residues Lys147, Lys148, and Lys149 each participate in an isoglutamyl lysine isopeptide (Lys-Gln) (interchain with Q-?) cross-link. Acidic residues predominate over residues 152-180 (EEDDEEDEEDEEEEEEEEDEDEEEDDDDE).

Belongs to the HMGB family. As to quaternary structure, interacts (fully reduced HMGB1) with CXCL12; probably in a 1:2 ratio involving two molecules of CXCL12, each interacting with one HMG box of HMGB1; inhibited by glycyrrhizin. Associates with the TLR4:LY96 receptor complex. Component of the RAG complex composed of core components RAG1 and RAG2, and associated component HMGB1 or HMGB2. Interacts (in cytoplasm upon starvation) with BECN1; inhibits the interaction of BECN1 and BCL2 leading to promotion of autophagy. Interacts with KPNA1; involved in nuclear import. Interacts with SREBF1, TLR2, TLR4, TLR9, PTPRZ1, APEX1, FEN1, POLB, TERT. Interacts with IL1B, AGER, MSH2, XPA, XPC, HNF1A, TP53. Interacts with CD24; the probable CD24:SIGLEC10 complex is proposed to inhibit HGMB1-mediated tissue damage immune response. Interacts with THBD; prevents HGMB1 interaction with ACER/RAGE and inhibits HGMB1 pro-inflammatory activity. Interacts with HAVCR2; impairs HMGB1 binding to B-DNA and likely HMGB1-mediated innate immune response. Interacts with XPO1; mediating nuclear export. Interacts with receptor RAGE/AGER. Post-translationally, phosphorylated at serine residues. Phosphorylation in both NLS regions is required for cytoplasmic translocation followed by secretion. In terms of processing, acetylated on multiple sites upon stimulation with LPS. Acetylation on lysine residues in the nuclear localization signals (NLS 1 and NLS 2) leads to cytoplasmic localization and subsequent secretion. Reduction/oxidation of cysteine residues and a possible intramolecular disulfide bond give rise to different redox forms with specific functional activities in various cellular compartments: 1- fully reduced HMGB1 (HMGB1C23hC45hC106h), 2-disulfide HMGB1 (HMGB1C23-C45C106h) and 3- sulfonyl HMGB1 (HMGB1C23soC45soC106so). Post-translationally, poly-ADP-ribosylated by PARP1 when secreted following stimulation with LPS. In terms of processing, in vitro cleavage by CASP1 is liberating a HMG box 1-containing peptide which may mediate immunogenic activity; the peptide antagonizes apoptosis-induced immune tolerance. Can be proteolytically cleaved by a thrombin:thrombomodulin complex; reduces binding to heparin and pro-inflammatory activities. Forms covalent cross-links mediated by transglutaminase TGM2, between a glutamine and the epsilon-amino group of a lysine residue, forming homopolymers and heteropolymers.

The protein localises to the nucleus. The protein resides in the chromosome. It localises to the cytoplasm. It is found in the secreted. Its subcellular location is the cell membrane. The protein localises to the endosome. The protein resides in the endoplasmic reticulum-Golgi intermediate compartment. In terms of biological role, multifunctional redox sensitive protein with various roles in different cellular compartments. In the nucleus is one of the major chromatin-associated non-histone proteins and acts as a DNA chaperone involved in replication, transcription, chromatin remodeling, V(D)J recombination, DNA repair and genome stability. Proposed to be an universal biosensor for nucleic acids. Promotes host inflammatory response to sterile and infectious signals and is involved in the coordination and integration of innate and adaptive immune responses. In the cytoplasm functions as a sensor and/or chaperone for immunogenic nucleic acids implicating the activation of TLR9-mediated immune responses, and mediates autophagy. Acts as a danger-associated molecular pattern (DAMP) molecule that amplifies immune responses during tissue injury. Released to the extracellular environment can bind DNA, nucleosomes, IL-1 beta, CXCL12, AGER isoform 2/sRAGE, lipopolysaccharide (LPS) and lipoteichoic acid (LTA), and activates cells through engagement of multiple surface receptors. In the extracellular compartment fully reduced HMGB1 (released by necrosis) acts as a chemokine, disulfide HMGB1 (actively secreted) as a cytokine, and sulfonyl HMGB1 (released from apoptotic cells) promotes immunological tolerance. Has proangiogenic activity. May be involved in platelet activation. Binds to phosphatidylserine and phosphatidylethanolamide. Bound to RAGE mediates signaling for neuronal outgrowth. May play a role in accumulation of expanded polyglutamine (polyQ) proteins. Its function is as follows. Nuclear functions are attributed to fully reduced HGMB1. Associates with chromatin and binds DNA with a preference to non-canonical DNA structures such as single-stranded DNA, DNA-containing cruciforms or bent structures, supercoiled DNA and ZDNA. Can bent DNA and enhance DNA flexibility by looping thus providing a mechanism to promote activities on various gene promoters by enhancing transcription factor binding and/or bringing distant regulatory sequences into close proximity. May be involved in nucleotide excision repair (NER), mismatch repair (MMR) and base excision repair (BER) pathways, and double strand break repair such as non-homologous end joining (NHEJ). Involved in V(D)J recombination by acting as a cofactor of the RAG complex: acts by stimulating cleavage and RAG protein binding at the 23 bp spacer of conserved recombination signal sequences (RSS). In vitro can displace histone H1 from highly bent DNA. Can restructure the canonical nucleosome leading to relaxation of structural constraints for transcription factor-binding. Enhances binding of sterol regulatory element-binding proteins (SREBPs) such as SREBF1 to their cognate DNA sequences and increases their transcriptional activities. Facilitates binding of TP53 to DNA. May be involved in mitochondrial quality control and autophagy in a transcription-dependent fashion implicating HSPB1. Can modulate the activity of the telomerase complex and may be involved in telomere maintenance. Functionally, in the cytoplasm proposed to dissociate the BECN1:BCL2 complex via competitive interaction with BECN1 leading to autophagy activation. Can protect BECN1 and ATG5 from calpain-mediated cleavage and thus proposed to control their proautophagic and proapoptotic functions and to regulate the extent and severity of inflammation-associated cellular injury. In myeloid cells has a protective role against endotoxemia and bacterial infection by promoting autophagy. Involved in endosomal translocation and activation of TLR9 in response to CpG-DNA in macrophages. In the extracellular compartment (following either active secretion or passive release) involved in regulation of the inflammatory response. Fully reduced HGMB1 (which subsequently gets oxidized after release) in association with CXCL12 mediates the recruitment of inflammatory cells during the initial phase of tissue injury; the CXCL12:HMGB1 complex triggers CXCR4 homodimerization. Induces the migration of monocyte-derived immature dendritic cells and seems to regulate adhesive and migratory functions of neutrophils implicating AGER/RAGE and ITGAM. Can bind to various types of DNA and RNA including microbial unmethylated CpG-DNA to enhance the innate immune response to nucleic acids. Proposed to act in promiscuous DNA/RNA sensing which cooperates with subsequent discriminative sensing by specific pattern recognition receptors. Promotes extracellular DNA-induced AIM2 inflammasome activation implicating AGER/RAGE. Disulfide HMGB1 binds to transmembrane receptors, such as AGER/RAGE, TLR2, TLR4 and probably TREM1, thus activating their signal transduction pathways. Mediates the release of cytokines/chemokines such as TNF, IL-1, IL-6, IL-8, CCL2, CCL3, CCL4 and CXCL10. Promotes secretion of interferon-gamma by macrophage-stimulated natural killer (NK) cells in concert with other cytokines like IL-2 or IL-12. TLR4 is proposed to be the primary receptor promoting macrophage activation and signaling through TLR4 seems to implicate LY96/MD-2. In bacterial LPS- or LTA-mediated inflammatory responses binds to the endotoxins and transfers them to CD14 for signaling to the respective TLR4:LY96 and TLR2 complexes. Contributes to tumor proliferation by association with ACER/RAGE. Can bind to IL1-beta and signals through the IL1R1:IL1RAP receptor complex. Binding to class A CpG activates cytokine production in plasmacytoid dendritic cells implicating TLR9, MYD88 and AGER/RAGE and can activate autoreactive B cells. Via HMGB1-containing chromatin immune complexes may also promote B cell responses to endogenous TLR9 ligands through a B-cell receptor (BCR)-dependent and ACER/RAGE-independent mechanism. Inhibits phagocytosis of apoptotic cells by macrophages; the function is dependent on poly-ADP-ribosylation and involves binding to phosphatidylserine on the cell surface of apoptotic cells. In adaptive immunity may be involved in enhancing immunity through activation of effector T-cells and suppression of regulatory T (TReg) cells. In contrast, without implicating effector or regulatory T-cells, required for tumor infiltration and activation of T-cells expressing the lymphotoxin LTA:LTB heterotrimer thus promoting tumor malignant progression. Also reported to limit proliferation of T-cells. Released HMGB1:nucleosome complexes formed during apoptosis can signal through TLR2 to induce cytokine production. Involved in induction of immunological tolerance by apoptotic cells; its pro-inflammatory activities when released by apoptotic cells are neutralized by reactive oxygen species (ROS)-dependent oxidation specifically on Cys-106. During macrophage activation by activated lymphocyte-derived self apoptotic DNA (ALD-DNA) promotes recruitment of ALD-DNA to endosomes. The protein is High mobility group protein B1 (HMGB1) of Cricetulus griseus (Chinese hamster).